The chain runs to 509 residues: ATP synthase subunit alpha (509 aa).

169–176 (GDRQTGKT) is an ATP binding site.

The protein belongs to the ATPase alpha/beta chains family. As to quaternary structure, F-type ATPases have 2 components, CF(1) - the catalytic core - and CF(0) - the membrane proton channel. CF(1) has five subunits: alpha(3), beta(3), gamma(1), delta(1), epsilon(1). CF(0) has four main subunits: a(1), b(1), b'(1) and c(9-12).

It localises to the cell inner membrane. It carries out the reaction ATP + H2O + 4 H(+)(in) = ADP + phosphate + 5 H(+)(out). Functionally, produces ATP from ADP in the presence of a proton gradient across the membrane. The alpha chain is a regulatory subunit. The sequence is that of ATP synthase subunit alpha from Erythrobacter litoralis (strain HTCC2594).